The primary structure comprises 176 residues: RNA pyrophosphohydrolase (176 aa).

The Nudix hydrolase domain occupies 6–149 (GYRPNVGIVI…KRDVYRRVMK (144 aa)). Positions 38–59 (GGINPGESPEQAMYRELFEEVG) match the Nudix box motif.

This sequence belongs to the Nudix hydrolase family. RppH subfamily. The cofactor is a divalent metal cation.

In terms of biological role, accelerates the degradation of transcripts by removing pyrophosphate from the 5'-end of triphosphorylated RNA, leading to a more labile monophosphorylated state that can stimulate subsequent ribonuclease cleavage. The sequence is that of RNA pyrophosphohydrolase from Proteus mirabilis (strain HI4320).